The sequence spans 219 residues: Isovaleryl-homoserine lactone synthase (219 aa).

It belongs to the autoinducer synthase family.

It carries out the reaction 3-methylbutanoyl-CoA + S-adenosyl-L-methionine = N-isovaleryl-L-homoserine lactone + S-methyl-5'-thioadenosine + CoA + H(+). Functionally, catalyzes the synthesis of IV-HSL (isovaleryl-homoserine lactone), a quorum-sensing (QS) autoinducer molecule which binds to BjaR1 transcriptional regulator to activate expression of QS-dependent genes. Is active with isovaleryl-CoA but cannot use isovaleryl-ACP as acyl donor. The chain is Isovaleryl-homoserine lactone synthase (bjaI) from Bradyrhizobium diazoefficiens (strain JCM 10833 / BCRC 13528 / IAM 13628 / NBRC 14792 / USDA 110).